A 272-amino-acid polypeptide reads, in one-letter code: Putative hydro-lyase BBta_2883 (272 aa).

Belongs to the D-glutamate cyclase family.

The polypeptide is Putative hydro-lyase BBta_2883 (Bradyrhizobium sp. (strain BTAi1 / ATCC BAA-1182)).